The sequence spans 63 residues: Large ribosomal subunit protein bL32 (63 aa).

Positions 1-16 (MAVPKRKTSRMKRGFR) are enriched in basic residues. The segment at 1–22 (MAVPKRKTSRMKRGFRRSADAI) is disordered.

This sequence belongs to the bacterial ribosomal protein bL32 family.

The protein is Large ribosomal subunit protein bL32 of Beijerinckia indica subsp. indica (strain ATCC 9039 / DSM 1715 / NCIMB 8712).